A 122-amino-acid polypeptide reads, in one-letter code: Large ribosomal subunit protein uL14 (122 aa).

Forms a cluster with proteins L3 and L19. In the 70S ribosome, L14 and L19 interact and together make contacts with the 16S rRNA in bridges B5 and B8. Part of the 50S ribosomal subunit.

In terms of biological role, binds to 23S rRNA. Forms part of two intersubunit bridges in the 70S ribosome. This Rhodopseudomonas palustris (strain ATCC BAA-98 / CGA009) protein is Large ribosomal subunit protein uL14.